The chain runs to 610 residues: Protein arginine N-methyltransferase 5 (610 aa).

One can recognise an SAM-dependent MTase PRMT-type domain in the interval 284–587; that stretch reads LEIPLQPLCD…VDATKVWYEW (304 aa). Tyr300 is an S-adenosyl-L-methionine binding site. A protein is bound at residue Phe303. Residues 309–310, Glu368, and 396–397 each bind S-adenosyl-L-methionine; these read KY and DM. Residues Glu412 and Glu421 each contribute to the a protein site. Active-site proton donor/acceptor residues include Glu412 and Glu421. The segment at 470 to 610 is interaction with vls; it reads AFDYGYVSLL…TRGTGYNMRL (141 aa).

It belongs to the class I-like SAM-binding methyltransferase superfamily. Protein arginine N-methyltransferase family. In terms of assembly, interacts with vls. As to expression, expressed only in ovaries.

The protein localises to the cytoplasm. Its function is as follows. Arginine methyltransferase that can both catalyze the formation of omega-N monomethylarginine (MMA) and symmetrical dimethylarginine (sDMA). Specifically mediates the symmetrical dimethylation of arginine residues in the small nuclear ribonucleoproteins SmD1 and SmD3. Required for arginine symmetrical dimethylation of piwi family proteins, piwi, aub and AGO3, during germline development. Required during oogenesis for pole cell formation in the pathway controlled by oskar (osk) and for abdominal segments during early embryogenesis. Involved in nanos (nos) and germ cell mRNAs localization. The protein is Protein arginine N-methyltransferase 5 of Drosophila melanogaster (Fruit fly).